The chain runs to 453 residues: Citrate (Re)-synthase (453 aa).

The region spanning Ile46–Thr316 is the Pyruvate carboxyltransferase domain.

This sequence belongs to the alpha-IPM synthase/homocitrate synthase family. Requires Mn(2+) as cofactor. Co(2+) serves as cofactor. Mg(2+) is required as a cofactor.

It carries out the reaction oxaloacetate + acetyl-CoA + H2O = citrate + CoA + H(+). Its activity is regulated as follows. Inhibited by p-chloromercuribenzoate (pCMB), EDTA, Zn(2+) ions, and under aerobic conditions. Its function is as follows. Catalyzes the condensation of the acetyl group of acetyl-CoA with oxaloacetate to form citrate. This enzyme is highly Re-face stereospecific with respect to the C-2 of oxaloacetate. This Clostridium kluyveri (strain ATCC 8527 / DSM 555 / NBRC 12016 / NCIMB 10680 / K1) protein is Citrate (Re)-synthase.